The following is a 78-amino-acid chain: Large ribosomal subunit protein bL28 (78 aa).

This sequence belongs to the bacterial ribosomal protein bL28 family.

The polypeptide is Large ribosomal subunit protein bL28 (Trichodesmium erythraeum (strain IMS101)).